A 109-amino-acid chain; its full sequence is Putative double-stranded DNA mimic protein KPK_2119 (109 aa).

Belongs to the putative dsDNA mimic protein family.

May act as a double-stranded DNA (dsDNA) mimic. Probably regulates the activity of a dsDNA-binding protein. The polypeptide is Putative double-stranded DNA mimic protein KPK_2119 (Klebsiella pneumoniae (strain 342)).